Consider the following 295-residue polypeptide: Myosin light chain kinase A (295 aa).

A Protein kinase domain is found at 8–265; sequence YEFKEELGRG…ATNALNHPWL (258 aa). ATP-binding positions include 14-22 and K37; that span reads LGRGAFSIV. The active-site Proton acceptor is the D130. A phosphothreonine mark is found at T166 and T289. The autoinhibitory domain stretch occupies residues 264-295; that stretch reads WLKSNNSNNTIDTVKMKEYIVERQKTQTKLVN.

It belongs to the protein kinase superfamily. CAMK Ser/Thr protein kinase family. CaMK subfamily. Post-translationally, autophosphorylated. Transiently phosphorylated on Thr-166 and Thr-289. This phosphorylation is gbpC-dependent.

The enzyme catalyses L-seryl-[myosin light chain] + ATP = O-phospho-L-seryl-[myosin light chain] + ADP + H(+). It catalyses the reaction L-threonyl-[myosin light chain] + ATP = O-phospho-L-threonyl-[myosin light chain] + ADP + H(+). Possesses an autoinhibitory domain. Autophosphorylation appears to increase the enzymatic activity. Activation is gbdC-dependent. Does not have a calmodulin-binding domain. Phosphorylates a specific serine in the N-terminus of a myosin light chain. Phosphorylates regulatory myosin light chain (mlcR) during chemotaxis. mlcR phosphorylation increases the motility and actin-activated ATPase activity of myosin, contributing to chemotaxis. The chain is Myosin light chain kinase A (mlkA) from Dictyostelium discoideum (Social amoeba).